A 457-amino-acid polypeptide reads, in one-letter code: G-protein coupled receptor 135 (457 aa).

The disordered stretch occupies residues 1–27; that stretch reads MEEQARPPSRPAASATLPGSAHPGGAA. Topologically, residues 1–64 are extracellular; the sequence is MEEQARPPSR…EAAGSRGPAP (64 aa). N47 is a glycosylation site (N-linked (GlcNAc...) asparagine). A helical transmembrane segment spans residues 65–85; that stretch reads LLWHGAAVAAQALVLLLIFLL. Over 86 to 109 the chain is Cytoplasmic; it reads SSLGNCAVMGVIVKHRQLRTVTNA. A helical transmembrane segment spans residues 110 to 130; sequence FILSLSLSDLLTALLCLPAAF. The Extracellular portion of the chain corresponds to 131 to 156; it reads LDLFAPPGDSGPWRSFCAASRFFSSC. Residues 157–177 traverse the membrane as a helical segment; that stretch reads FGIVSTFSVALISLDRYCAIV. Residues 178–189 lie on the Cytoplasmic side of the membrane; the sequence is RPPRDKLGRRRA. A helical membrane pass occupies residues 190 to 210; the sequence is LQLLAGAWLAALGFSLPWELL. The Extracellular portion of the chain corresponds to 211–235; that stretch reads RAPREPPTPQSFHRCLYRTSPDPAQ. Residues 236–256 traverse the membrane as a helical segment; it reads LGAAYSVGLVVACYLLPFLLM. Residues 257 to 295 lie on the Cytoplasmic side of the membrane; sequence CFCRYHICKTVRLSDVRVRPMTTYARVLRFFSEVRTATT. Residues 296–316 form a helical membrane-spanning segment; sequence VLIMIVFVICCWGPYCFLVLL. Topologically, residues 317–329 are extracellular; sequence AATRQGQTTQAPS. A helical transmembrane segment spans residues 330-350; the sequence is LLNVAAVWLTWANGAINPVIY. The Cytoplasmic segment spans residues 351–457; it reads AIRNPNISMF…HKSETRDSSI (107 aa).

This sequence belongs to the G-protein coupled receptor 1 family. As to quaternary structure, interacts with MTNR1B. Interacts with ARRB1 and ARRB2 in a spontaneous and agonist-independent manner; leading to the internalization of GPR135 in the endosomal compartment.

Its subcellular location is the cell membrane. It is found in the endosome membrane. Functionally, orphan receptor. Has spontaneous activity for beta-arrestin recruitment. Shows a reciprocal regulatory interaction with the melatonin receptor MTNR1B most likely through receptor heteromerization. The sequence is that of G-protein coupled receptor 135 (Gpr135) from Rattus norvegicus (Rat).